Here is a 410-residue protein sequence, read N- to C-terminus: Protein disulfide isomerase CRELD1 (410 aa).

The first 29 residues, 1 to 29, serve as a signal peptide directing secretion; it reads MGMSRRMFLTVYGSLWLLLLLSRPGVSKP. Over 30-352 the chain is Extracellular; that stretch reads QLCQTCQNLV…GLFDDITDDE (323 aa). The CXXC signature appears at 32–35; the sequence is CQTC. 4 cysteine pairs are disulfide-bonded: cysteine 32–cysteine 35, cysteine 141–cysteine 155, cysteine 149–cysteine 167, and cysteine 169–cysteine 178. One can recognise an EGF-like 1 domain in the interval 139–179; that stretch reads LSCPGGTEKPCSGNGQCNGDGTRFGTGVCDCYTSYGGPVCM. 2 FU repeats span residues 194-243 and 254-301; these read HLVC…DHCK and SYEC…ELPK. Residues 264–267 carry the CXXC motif; it reads CIGC. Intrachain disulfides connect cysteine 264–cysteine 267, cysteine 295–cysteine 309, cysteine 302–cysteine 318, and cysteine 320–cysteine 331. An EGF-like 2; calcium-binding domain is found at 291-332; the sequence is DVDECDSELPKCKGSHEECVNTEGSFTCVCEKDYSRIDGMCR. Residues 353-373 traverse the membrane as a helical segment; sequence VVVLQQMFFGVVICALATLAA. Lysine 374 is a topological domain (cytoplasmic). The helical transmembrane segment at 375 to 395 threads the bilayer; sequence GDMVFTAIFIGAVAAMAGYWL. Over 396 to 410 the chain is Extracellular; that stretch reads SEKGDRALDSFMKGR.

The protein belongs to the CRELD family.

Its subcellular location is the membrane. It catalyses the reaction Catalyzes the rearrangement of -S-S- bonds in proteins.. In terms of biological role, protein disulfide isomerase. Promotes the localization of acetylcholine receptors (AChRs) to the plasma membrane. The chain is Protein disulfide isomerase CRELD1 (creld1) from Xenopus tropicalis (Western clawed frog).